Here is a 3942-residue protein sequence, read N- to C-terminus: Protein bassoon (3942 aa).

The disordered stretch occupies residues 1 to 158 (MGNEASLEGG…PTSPYSVPQI (158 aa)). Glycine 2 carries N-myristoyl glycine lipidation. Residues 9-29 (GGAGEGPLPPGGSGLGPGPGA) show a composition bias toward gly residues. The segment covering 31 to 52 (KPPSALAGGGQLPVAGAARAAG) has biased composition (low complexity). A compositionally biased stretch (pro residues) spans 53 to 71 (PPTPGLGPVPGPGPGPGPG). The tract at residues 62-71 (PGPGPGPGPG) is 5 X 2 AA tandem repeats of P-G. Composition is skewed to polar residues over residues 85-98 (SQRT…QASA) and 127-154 (QVDS…SPYS). Serine 142 bears the Phosphoserine mark. Residue arginine 145 is modified to Omega-N-methylarginine. C4-type zinc fingers lie at residues 167–190 (CPIC…CTQC) and 195–217 (CNQC…CLNC). 2 disordered regions span residues 228–341 (TTAP…EQTQ) and 362–457 (LMSV…KTMP). Over residues 230-240 (APRSKSQQQLH) the composition is skewed to polar residues. Serine 241 and serine 245 each carry phosphoserine. The segment covering 362–379 (LMSVQPEADTQGQPSPSK) has biased composition (polar residues). Positions 395–407 (PRPPGSGPGPGPT) are enriched in pro residues. 2 C4-type zinc fingers span residues 464–487 (CPLC…CTAC) and 492–514 (CNLC…CLNC). Disordered regions lie at residues 525–937 (GEPA…LQGG), 950–1258 (GSYG…VAES), 1309–1553 (MDPM…WQQS), and 1573–1625 (RMVH…PSAG). Residues 528–541 (APLPLPTPQQPPAG) are compositionally biased toward pro residues. 5 repeat units span residues 570–576 (KASPQAT), 577–583 (KASPQAT), 584–590 (KASPQAT), 591–597 (KASPQTT), and 598–604 (KASPQAK). The segment at 570-604 (KASPQATKASPQATKASPQATKASPQTTKASPQAK) is 5 X 7 AA tandem repeats of K-A-S-P-Q-[AT]-[AT]. The segment covering 573-600 (PQATKASPQATKASPQATKASPQTTKAS) has biased composition (polar residues). Residues 632-645 (VPKPPPETTVPPGT) are compositionally biased toward pro residues. Residues 684 to 693 (QDLSRSPQSL) are compositionally biased toward polar residues. The span at 694–708 (SDTGYSSDGVSSSQS) shows a compositional bias: low complexity. Polar residues predominate over residues 709 to 718 (EITGVVQQEV). Composition is skewed to acidic residues over residues 787–802 (FDSD…EDDS) and 865–876 (SAEEDNLEEDDT). Arginine 881 carries the omega-N-methylarginine modification. Over residues 895–905 (PRPESSQEPKR) the composition is skewed to basic and acidic residues. Serine 980 carries the post-translational modification Phosphoserine. The segment covering 994-1011 (PASTPSYTSGTSPTSLSS) has biased composition (low complexity). The segment covering 1049–1062 (DSSEEEELREEEEL) has biased composition (acidic residues). Residues serine 1050 and serine 1051 each carry the phosphoserine modification. A compositionally biased stretch (basic and acidic residues) spans 1063–1076 (LREQEKMREVEQQR). Serine 1100 is modified (phosphoserine). Phosphothreonine is present on threonine 1102. A phosphoserine mark is found at serine 1108 and serine 1114. Over residues 1117-1132 (EELRQAAEMEELHRSS) the composition is skewed to basic and acidic residues. Low complexity-rich tracts occupy residues 1133–1143 (CSEYSPSPSLD) and 1173–1190 (SPTE…SGRP). A compositionally biased stretch (basic and acidic residues) spans 1192–1207 (KSAEEAYEDMMRKAEM). Low complexity predominate over residues 1209–1219 (QRQQGQVAGAR). Over residues 1226 to 1240 (SQPTGPRSQGSFEYQ) the composition is skewed to polar residues. At serine 1236 the chain carries Phosphoserine. Low complexity predominate over residues 1333 to 1343 (SFSTSTSSDSS). O-linked (GlcNAc) threonine glycosylation is present at threonine 1354. Over residues 1357–1366 (FAKEPQDPLK) the composition is skewed to basic and acidic residues. Polar residues predominate over residues 1370–1438 (SPVSSTLTSK…TTANYGSQTE (69 aa)). Threonine 1395 carries O-linked (GlcNAc) threonine glycosylation. Residues serine 1482, serine 1491, and serine 1493 each carry the phosphoserine modification. The segment covering 1488 to 1498 (STPSESPTFSP) has biased composition (low complexity). Composition is skewed to polar residues over residues 1508 to 1522 (EFST…SSDI) and 1573 to 1609 (RMVH…SQMP). An O-linked (GlcNAc) serine glycan is attached at serine 1707. Residues arginine 1792 and arginine 1796 each carry the omega-N-methylarginine modification. Residue arginine 1806 is modified to Asymmetric dimethylarginine; alternate. The residue at position 1806 (arginine 1806) is an Omega-N-methylarginine; alternate. Residue arginine 1818 is modified to Omega-N-methylarginine. Disordered stretches follow at residues 1831–1865 (GVGL…TRKP) and 1926–1977 (PSAP…QRPY). Residues 1844–1856 (AEPHRATPAELRS) show a composition bias toward basic and acidic residues. O-linked (GlcNAc) threonine glycosylation is present at threonine 1934. Phosphoserine is present on residues serine 1990 and serine 2046. Omega-N-methylarginine occurs at positions 2051 and 2081. Asymmetric dimethylarginine is present on residues arginine 2255, arginine 2265, and arginine 2270. An O-linked (GlcNAc) threonine glycan is attached at threonine 2318. Disordered stretches follow at residues 2327–2378 (PVAP…KQQE), 2476–2504 (EQKQ…TELA), and 2524–2663 (TEGP…STTA). Residues 2329 to 2342 (APAPGPAPAPPPGQ) show a composition bias toward pro residues. A compositionally biased stretch (basic and acidic residues) spans 2361 to 2378 (ASEKEEASQEDRQRKQQE). 2 coiled-coil regions span residues 2366–2422 (EASQ…LVQR) and 2453–2483 (LAQQ…RQKA). O-linked (GlcNAc) threonine glycosylation is present at threonine 2524. The span at 2541-2551 (SSASDMSLQTE) shows a compositional bias: polar residues. Position 2578 is a phosphoserine (serine 2578). Phosphothreonine occurs at positions 2595 and 2622. Over residues 2643 to 2655 (RHSDSGSDSKHDA) the composition is skewed to basic and acidic residues. Threonine 2700 carries an O-linked (GlcNAc) threonine glycan. The interaction with DAO stretch occupies residues 2730–3278 (EPDGQAQGVA…GGVSGRPGKD (549 aa)). Phosphoserine occurs at positions 2811, 2860, and 2866. The interval 2854 to 2874 (TLQRSLSDPKPLSPTAEESAK) is disordered. O-linked (GlcNAc) threonine glycosylation is present at threonine 2945. Serine 3022 bears the Phosphoserine mark. 3 disordered regions span residues 3051–3409 (PATP…LTSR), 3431–3560 (YYGV…PRAH), and 3581–3917 (EAYH…KILP). Polar residues predominate over residues 3073–3083 (TAGSSGPTQNG). Positions 3089 to 3114 (APTYTGPSTYPAPTYPPGTGYPAEPG) are enriched in low complexity. A compositionally biased stretch (basic and acidic residues) spans 3202 to 3211 (KAPEHPRGSD). A compositionally biased stretch (polar residues) spans 3212–3237 (RSSVSQSPAPTYPSDSHYTSLEQNVP). Residue serine 3301 is modified to Phosphoserine. Basic and acidic residues-rich tracts occupy residues 3330-3342 (GDSD…RADK) and 3372-3391 (QGME…KDVE). A Phosphoserine modification is found at serine 3382. Low complexity predominate over residues 3447–3461 (YGSSSRSRMASAYSG). Basic and acidic residues predominate over residues 3464–3487 (LSSHDYSSRGKGYERERDTAERLQ). At arginine 3502 the chain carries Omega-N-methylarginine. The span at 3520 to 3534 (PLGRPRPAGGALPPG) shows a compositional bias: low complexity. 2 stretches are compositionally biased toward basic and acidic residues: residues 3549-3560 (VQEHVKDGPRAH) and 3592-3602 (WFDKPRDARSD). Over residues 3652 to 3665 (EHRHHSDHGRHSGR) the composition is skewed to basic residues. Over residues 3666–3690 (HAGEEPGRRAAKPHARDMGRHEARP) the composition is skewed to basic and acidic residues. Over residues 3750-3820 (TQAQPQMQGR…QARLQPQSQP (71 aa)) the composition is skewed to low complexity. An Omega-N-methylarginine modification is found at arginine 3823. Over residues 3835–3851 (KPQPGPTTAPGPQPAGP) the composition is skewed to pro residues. Over residues 3856-3891 (QASSSKPPAAKAPQQGRAPQAQTTPGPGPAGAKPGA) the composition is skewed to low complexity.

In terms of assembly, interacts with PCLO, ERC2/CAST1, RIMS1 and UNC13A. Interacts with TPRG1L. Interacts with DYNLL1 and DYNLL2; these interactions potentially link PTVs to dynein and myosin V motor complexes. Interacts with ATG5; this interaction is important for the regulation of presynaptic autophagy. Interacts (via C-terminus) with TRIO (via N-terminus). Interacts with CTBP1. Interacts with SIAH1; this interaction negatively regulates SIAH1 E3 ligase activity. Interacts (via coiled region) with DAO; the interaction is direct. Post-translationally, myristoylated. The N-terminal myristoylation is not sufficient for presynaptic localization. As to expression, expressed in brain and retina.

It is found in the cytoplasm. The protein resides in the presynaptic active zone. Its subcellular location is the cytoskeleton. It localises to the cytoplasmic vesicle. The protein localises to the secretory vesicle. It is found in the synaptic vesicle membrane. In terms of biological role, scaffold protein of the presynaptic cytomatrix at the active zone (CAZ) which is the place in the synapse where neurotransmitter is released. After synthesis, participates in the formation of Golgi-derived membranous organelles termed Piccolo-Bassoon transport vesicles (PTVs) that are transported along axons to sites of nascent synaptic contacts. At the presynaptic active zone, regulates the spatial organization of synaptic vesicle cluster, the protein complexes that execute membrane fusion and compensatory endocytosis. Also functions in processes other than assembly such as the regulation of specific presynaptic protein ubiquitination by interacting with SIAH1 or the regulation of presynaptic autophagy by associating with ATG5. Also mediates synapse to nucleus communication leading to reconfiguration of gene expression by associating with the transcriptional corepressor CTBP1 and by subsequently reducing the size of its pool available for nuclear import. Inhibits the activity of the proportion of DAO enzyme that localizes to the presynaptic active zone, which may modulate synaptic transmission. This is Protein bassoon from Mus musculus (Mouse).